The chain runs to 270 residues: MAAPGEALTPSSYITHHLTNLSTYKLGLVAEESSFWNVHIDSLFFSVLTGLIFLGVFRAVARKATAGVPGKLQCAVEMVVEFVDKNVKDTFHGRNPLIAPLALTIFCWVFLMNLMDLVPIDFLPYPAQHWLGIPYLKVVPSADVNITMAMALGVFALMIYYSIKVKGLGGFAKELALHPFNHWIMIPFNLLIEVVSLLAKPLSLGMRLFGNMFAGEVVFILCAAMLPWYLQWMGSLPWAIFHILVILIQSFVFMMLTIVYMSMAHEDNDH.

5 helical membrane-spanning segments follow: residues 37–57 (NVHIDSLFFSVLTGLIFLGVF), 98–118 (IAPLALTIFCWVFLMNLMDLV), 143–163 (DVNITMAMALGVFALMIYYSI), 208–228 (LFGNMFAGEVVFILCAAMLPW), and 239–259 (AIFHILVILIQSFVFMMLTIV).

This sequence belongs to the ATPase A chain family. As to quaternary structure, F-type ATPases have 2 components, CF(1) - the catalytic core - and CF(0) - the membrane proton channel. CF(1) has five subunits: alpha(3), beta(3), gamma(1), delta(1), epsilon(1). CF(0) has three main subunits: a(1), b(2) and c(9-12). The alpha and beta chains form an alternating ring which encloses part of the gamma chain. CF(1) is attached to CF(0) by a central stalk formed by the gamma and epsilon chains, while a peripheral stalk is formed by the delta and b chains.

Its subcellular location is the cell inner membrane. Key component of the proton channel; it plays a direct role in the translocation of protons across the membrane. In Vibrio cholerae serotype O1 (strain ATCC 39315 / El Tor Inaba N16961), this protein is ATP synthase subunit a.